The primary structure comprises 230 residues: Thymidylate kinase (230 aa).

20–27 (GGEGAGKS) is an ATP binding site.

Belongs to the thymidylate kinase family.

The enzyme catalyses dTMP + ATP = dTDP + ADP. Phosphorylation of dTMP to form dTDP in both de novo and salvage pathways of dTTP synthesis. In Rhodopseudomonas palustris (strain ATCC BAA-98 / CGA009), this protein is Thymidylate kinase.